A 486-amino-acid chain; its full sequence is Deleted in azoospermia protein 3 (486 aa).

A compositionally biased stretch (polar residues) spans 1–10; it reads MSAANPETPN. The segment at 1–27 is disordered; that stretch reads MSAANPETPNSTISREASTQSSSAAAS. The segment covering 11–27 has biased composition (low complexity); that stretch reads STISREASTQSSSAAAS. Residues 40-115 form the RRM domain; the sequence is NTVFVGGIDA…KKLKLGPAIR (76 aa). DAZ domains lie at 167–190, 191–214, 215–238, 239–262, 263–286, 287–310, 311–334, 335–358, 359–382, 383–406, 407–430, and 431–454; these read AYSA…YNYQ, EYPT…YNYQ, PFPA…YNYQ, and AFPA…YNYQ.

It belongs to the RRM DAZ family. As to quaternary structure, forms a heterodimer with BOLL and DAZL. Interacts with PUM2, DAZAP1, DAZAP2, DZIP1 and DZIP3. In terms of tissue distribution, testis specific.

The protein localises to the cytoplasm. It is found in the nucleus. In terms of biological role, RNA-binding protein that plays an essential role in spermatogenesis. May act by binding to the 3'-UTR of mRNAs and regulating their translation. In Homo sapiens (Human), this protein is Deleted in azoospermia protein 3 (DAZ3).